Reading from the N-terminus, the 547-residue chain is DNA polymerase kappa (547 aa).

The tract at residues 18–39 (LTIEDDGSSSSDEEATLKRRLA) is disordered. The span at 20–31 (IEDDGSSSSDEE) shows a compositional bias: acidic residues. Residues 132-316 (IVHVDCDAFY…LPVREVSGIG (185 aa)) enclose the UmuC domain. Mg(2+) contacts are provided by Asp-136 and Asp-226. Residues 489–518 (TVPCPVCQKNIENELGILNQHVDLCLNVET) form a UBZ4-type zinc finger. Positions 492, 495, 509, and 513 each coordinate Zn(2+).

Interacts with hus1 and rad17.

The protein resides in the cytoplasm. It localises to the nucleus. The catalysed reaction is DNA(n) + a 2'-deoxyribonucleoside 5'-triphosphate = DNA(n+1) + diphosphate. Its function is as follows. DNA polymerase specifically involved in DNA repair. Plays an important role in translesion synthesis, where the normal high-fidelity DNA polymerases cannot proceed and DNA synthesis stalls. Has a role in meiosis. The sequence is that of DNA polymerase kappa (mug40) from Schizosaccharomyces pombe (strain 972 / ATCC 24843) (Fission yeast).